Here is a 249-residue protein sequence, read N- to C-terminus: Triosephosphate isomerase (249 aa).

Asn-9–Lys-11 is a binding site for substrate. Catalysis depends on His-95, which acts as the Electrophile. The active-site Proton acceptor is Glu-167. Residues Gly-173, Ser-213, and Gly-234–Gly-235 contribute to the substrate site.

Belongs to the triosephosphate isomerase family. As to quaternary structure, homodimer.

The protein localises to the cytoplasm. The catalysed reaction is D-glyceraldehyde 3-phosphate = dihydroxyacetone phosphate. It functions in the pathway carbohydrate biosynthesis; gluconeogenesis. The protein operates within carbohydrate degradation; glycolysis; D-glyceraldehyde 3-phosphate from glycerone phosphate: step 1/1. In terms of biological role, involved in the gluconeogenesis. Catalyzes stereospecifically the conversion of dihydroxyacetone phosphate (DHAP) to D-glyceraldehyde-3-phosphate (G3P). In Dictyoglomus thermophilum (strain ATCC 35947 / DSM 3960 / H-6-12), this protein is Triosephosphate isomerase.